We begin with the raw amino-acid sequence, 392 residues long: Phosphoglycerate kinase (392 aa).

Substrate is bound by residues 21 to 23 (DFN), arginine 36, 59 to 62 (HLGR), arginine 118, and arginine 151. Residues lysine 201, glycine 292, glutamate 323, and 349–352 (GGDS) each bind ATP.

Belongs to the phosphoglycerate kinase family. As to quaternary structure, monomer.

Its subcellular location is the cytoplasm. The catalysed reaction is (2R)-3-phosphoglycerate + ATP = (2R)-3-phospho-glyceroyl phosphate + ADP. It participates in carbohydrate degradation; glycolysis; pyruvate from D-glyceraldehyde 3-phosphate: step 2/5. This is Phosphoglycerate kinase from Borrelia turicatae (strain 91E135).